The chain runs to 338 residues: Fructose-1,6-bisphosphatase class 1 (338 aa).

Positions 92, 114, 116, and 117 each coordinate Mg(2+). Substrate is bound by residues 117–120 (DGSS), asparagine 210, tyrosine 243, and lysine 276. Glutamate 282 serves as a coordination point for Mg(2+).

This sequence belongs to the FBPase class 1 family. In terms of assembly, homotetramer. It depends on Mg(2+) as a cofactor.

The protein resides in the cytoplasm. It catalyses the reaction beta-D-fructose 1,6-bisphosphate + H2O = beta-D-fructose 6-phosphate + phosphate. The protein operates within carbohydrate biosynthesis; gluconeogenesis. This Maridesulfovibrio salexigens (strain ATCC 14822 / DSM 2638 / NCIMB 8403 / VKM B-1763) (Desulfovibrio salexigens) protein is Fructose-1,6-bisphosphatase class 1.